The chain runs to 224 residues: Peptide deformylase 3 (224 aa).

Fe cation-binding residues include Cys-135 and His-177. Glu-178 is a catalytic residue. Fe cation is bound at residue His-181.

This sequence belongs to the polypeptide deformylase family. Fe(2+) serves as cofactor.

It carries out the reaction N-terminal N-formyl-L-methionyl-[peptide] + H2O = N-terminal L-methionyl-[peptide] + formate. Functionally, removes the formyl group from the N-terminal Met of newly synthesized proteins. Requires at least a dipeptide for an efficient rate of reaction. N-terminal L-methionine is a prerequisite for activity but the enzyme has broad specificity at other positions. This is Peptide deformylase 3 from Streptomyces avermitilis (strain ATCC 31267 / DSM 46492 / JCM 5070 / NBRC 14893 / NCIMB 12804 / NRRL 8165 / MA-4680).